Consider the following 144-residue polypeptide: Ribosomal RNA large subunit methyltransferase H (144 aa).

S-adenosyl-L-methionine-binding positions include leucine 68, glycine 96, and 112-117 (FSKLTF).

This sequence belongs to the RNA methyltransferase RlmH family. As to quaternary structure, homodimer.

The protein localises to the cytoplasm. The enzyme catalyses pseudouridine(1915) in 23S rRNA + S-adenosyl-L-methionine = N(3)-methylpseudouridine(1915) in 23S rRNA + S-adenosyl-L-homocysteine + H(+). Specifically methylates the pseudouridine at position 1915 (m3Psi1915) in 23S rRNA. This Mycoplasmopsis synoviae (strain 53) (Mycoplasma synoviae) protein is Ribosomal RNA large subunit methyltransferase H.